We begin with the raw amino-acid sequence, 236 residues long: Small ribosomal subunit protein uS2c (236 aa).

This sequence belongs to the universal ribosomal protein uS2 family.

The protein resides in the plastid. The protein localises to the chloroplast. The chain is Small ribosomal subunit protein uS2c (rps2) from Oryza sativa (Rice).